Reading from the N-terminus, the 1755-residue chain is Transposon Ty1-ER2 Gag-Pol polyprotein (1755 aa).

Polar residues-rich tracts occupy residues 1–10, 48–60, and 127–152; these read MESQQLSNYP, TKANSQQTTTPAS, and QSQFPQYPSSVGTPLSTPSPESGNTF. Disordered stretches follow at residues 1–93, 126–173, and 352–421; these read MESQ…MMTQ, PQSQ…RPPP, and GSRN…SKST. The span at 153–165 shows a compositional bias: low complexity; the sequence is TDSSSADSDMTST. The tract at residues 299–401 is RNA-binding; the sequence is NNGIHINNKV…NSKSKTARAH (103 aa). Positions 402 to 418 are enriched in low complexity; that stretch reads NVSTSNNSPSTDNDSIS. Aspartate 461 serves as the catalytic For protease activity; shared with dimeric partner. Residues 583–640 are integrase-type zinc finger-like; that stretch reads NVHTSESTRKYPYPFIHRMLAHANAQTIRYSLKNNTITYFNESDVDWSSAIDYQCPDC. The Integrase catalytic domain maps to 660–835; sequence NSYEPFQYLH…AGLDISTLLP (176 aa). Positions 671 and 736 each coordinate Mg(2+). The segment at 958–1170 is disordered; sequence AVSPTDSTPP…SSLGGIGDSN (213 aa). A compositionally biased stretch (low complexity) spans 960 to 969; sequence SPTDSTPPST. Residues 1005–1015 are compositionally biased toward polar residues; the sequence is STPQISDIEST. The segment covering 1038–1053 has biased composition (basic and acidic residues); that stretch reads ESSHASKSKDFRHSDS. Composition is skewed to polar residues over residues 1054–1082 and 1095–1106; these read YSDNETNHTNVPISSTGGTNNKTVPQTSE and SIDTSSSESNSL. Residues 1178–1212 carry the Bipartite nuclear localization signal motif; the sequence is KKRSLEDNETEIKVSRDTWNTKNMRSLEPPRSKKR. One can recognise a Reverse transcriptase Ty1/copia-type domain in the interval 1338–1476; the sequence is NNYYITQLDI…DILGLEIKYQ (139 aa). Positions 1346, 1427, 1428, 1610, 1652, and 1685 each coordinate Mg(2+). One can recognise an RNase H Ty1/copia-type domain in the interval 1610-1752; the sequence is DASYGNQPYY…IKTFKLLTNK (143 aa).

In terms of assembly, the capsid protein forms a homotrimer, from which the VLPs are assembled. The protease is a homodimer, whose active site consists of two apposed aspartic acid residues. In terms of processing, initially, virus-like particles (VLPs) are composed of the structural unprocessed proteins Gag and Gag-Pol, and also contain the host initiator methionine tRNA (tRNA(i)-Met) which serves as a primer for minus-strand DNA synthesis, and a dimer of genomic Ty RNA. Processing of the polyproteins occurs within the particle and proceeds by an ordered pathway, called maturation. First, the protease (PR) is released by autocatalytic cleavage of the Gag-Pol polyprotein yielding capsid protein p45 and a Pol-p154 precursor protein. This cleavage is a prerequisite for subsequent processing of Pol-p154 at the remaining sites to release the mature structural and catalytic proteins. Maturation takes place prior to the RT reaction and is required to produce transposition-competent VLPs.

The protein resides in the cytoplasm. Its subcellular location is the nucleus. It carries out the reaction DNA(n) + a 2'-deoxyribonucleoside 5'-triphosphate = DNA(n+1) + diphosphate. It catalyses the reaction Endonucleolytic cleavage to 5'-phosphomonoester.. Its function is as follows. Capsid protein (CA) is the structural component of the virus-like particle (VLP), forming the shell that encapsulates the retrotransposons dimeric RNA genome. The particles are assembled from trimer-clustered units and there are holes in the capsid shells that allow for the diffusion of macromolecules. CA also has nucleocapsid-like chaperone activity, promoting primer tRNA(i)-Met annealing to the multipartite primer-binding site (PBS), dimerization of Ty1 RNA and initiation of reverse transcription. Functionally, the aspartyl protease (PR) mediates the proteolytic cleavages of the Gag and Gag-Pol polyproteins after assembly of the VLP. Reverse transcriptase/ribonuclease H (RT) is a multifunctional enzyme that catalyzes the conversion of the retro-elements RNA genome into dsDNA within the VLP. The enzyme displays a DNA polymerase activity that can copy either DNA or RNA templates, and a ribonuclease H (RNase H) activity that cleaves the RNA strand of RNA-DNA heteroduplexes during plus-strand synthesis and hydrolyzes RNA primers. The conversion leads to a linear dsDNA copy of the retrotransposon that includes long terminal repeats (LTRs) at both ends. In terms of biological role, integrase (IN) targets the VLP to the nucleus, where a subparticle preintegration complex (PIC) containing at least integrase and the newly synthesized dsDNA copy of the retrotransposon must transit the nuclear membrane. Once in the nucleus, integrase performs the integration of the dsDNA into the host genome. In Saccharomyces cerevisiae (strain ATCC 204508 / S288c) (Baker's yeast), this protein is Transposon Ty1-ER2 Gag-Pol polyprotein (TY1B-ER2).